Consider the following 320-residue polypeptide: Cytochrome f (320 aa).

The signal sequence occupies residues 1–35; it reads MQTRKTFSWIKEQIARSISVSLLIYIITRTSISSA. The heme site is built by Y36, C56, C59, and H60. Residues 286–306 form a helical membrane-spanning segment; the sequence is VQGLLFFLASVILAQIFLVLK.

Belongs to the cytochrome f family. The 4 large subunits of the cytochrome b6-f complex are cytochrome b6, subunit IV (17 kDa polypeptide, petD), cytochrome f and the Rieske protein, while the 4 small subunits are PetG, PetL, PetM and PetN. The complex functions as a dimer. Requires heme as cofactor.

It localises to the plastid. The protein resides in the chloroplast thylakoid membrane. Functionally, component of the cytochrome b6-f complex, which mediates electron transfer between photosystem II (PSII) and photosystem I (PSI), cyclic electron flow around PSI, and state transitions. This chain is Cytochrome f, found in Jasminum nudiflorum (Winter jasmine).